Here is a 102-residue protein sequence, read N- to C-terminus: Bowman-Birk type wound-induced proteinase inhibitor WIP1 (102 aa).

The N-terminal stretch at 1-15 (MKSSPHLVLILCLQA) is a signal peptide. 5 disulfides stabilise this stretch: Cys46–Cys102, Cys47–Cys60, Cys50–Cys98, Cys67–Cys74, and Cys71–Cys90.

This sequence belongs to the Bowman-Birk serine protease inhibitor family.

The polypeptide is Bowman-Birk type wound-induced proteinase inhibitor WIP1 (WIP1) (Zea mays (Maize)).